We begin with the raw amino-acid sequence, 1090 residues long: Leucine-rich repeat receptor-like serine/threonine-protein kinase RGI4 (1090 aa).

Positions 1 to 20 (MPRNPRFCFFLFLLFHSSLF) are cleaved as a signal peptide. Residues 21 to 702 (FSIPCFSIDE…IQTRHRSAVK (682 aa)) lie on the Extracellular side of the membrane. One copy of the LRR 1 repeat lies at 36-59 (LSWKSQLNISGDALSSWKASESNP). Asn43 is a glycosylation site (N-linked (GlcNAc...) asparagine). Cys60 and Cys67 are oxidised to a cystine. LRR repeat units lie at residues 95-119 (IKSL…LGDL), 120-143 (SELE…IFKL), 145-166 (KLKI…ELGN), and 168-191 (VNLI…IGEL). Asn107 carries an N-linked (GlcNAc...) asparagine glycan. 4 consecutive short sequence motifs (small peptide recognition) follow at residues 176–177 (FD), 198–201 (RAGG), 221–226 (TLGLAE), and Tyr249. 7 LRR repeats span residues 216–240 (CESL…IGNL), 242–264 (KVQT…IGNC), 265–288 (TELQ…MGRL), 289–312 (KKLQ…LGTC), 314–335 (ELFL…SFGN), 336–360 (LPNL…LANC), and 362–386 (KLTH…KLTS). N-linked (GlcNAc...) asparagine glycosylation occurs at Asn263. Positions 269 to 273 (NLYLY) match the CLE45 peptide binding motif. A Small peptide recognition motif is present at residues 271 to 273 (YLY). Short sequence motifs (small peptide recognition) lie at residues 319–322 (DLSE) and 341–343 (ELQ). Asn359 carries N-linked (GlcNAc...) asparagine glycosylation. Short sequence motifs (small peptide recognition) lie at residues 389–393 (MFFAW) and 415–418 (DLSY). LRR repeat units follow at residues 408 to 432 (CQEL…IFEI), 434 to 456 (NLTK…IGNC), 457 to 480 (TNLY…IGNL), 481 to 504 (KNLN…ISGC), 506 to 526 (SLEF…GTLP), 527 to 550 (KSLQ…IGSL), 551 to 574 (TELT…ISSC), 576 to 598 (SLQL…LGRI), 600 to 622 (SLAI…RFSS), 623 to 646 (LTNL…LADL), and 647 to 670 (QNLV…LFFR). 2 N-linked (GlcNAc...) asparagine glycosylation sites follow: Asn420 and Asn434. The Small peptide recognition signature appears at 437–441 (KLLLL). An N-linked (GlcNAc...) asparagine glycan is attached at Asn455. The Small peptide recognition signature appears at 461–463 (RLR). Asn606 carries N-linked (GlcNAc...) asparagine glycosylation. N-linked (GlcNAc...) asparagine glycosylation is present at Asn653. The chain crosses the membrane as a helical span at residues 703–723 (VTMSILVAASVVLVLMAVYTL). Over 724 to 1090 (VKAQRITGKQ…CSFAYSDESV (367 aa)) the chain is Cytoplasmic. A Protein kinase domain is found at 758–1040 (LTSANVIGTG…KDIVAMLKEI (283 aa)). ATP-binding positions include 764–772 (IGTGSSGVV) and Lys786. Tyr829 and Tyr869 each carry phosphotyrosine. The active-site Proton acceptor is Asp882. Position 932 is a phosphotyrosine (Tyr932). An LRR 24 repeat occupies 1037-1060 (LKEIRQFDMDRSESDMIKGGKCEK). The interval 1054–1079 (KGGKCEKWQPQPLPPEKIVSTPRGSS) is disordered.

Belongs to the protein kinase superfamily. Ser/Thr protein kinase family. Self-interacts. Interacts with RGF1; this interaction triggers its phosphorylation and ubiquitination and the formation of heterodimers with SERK1. Autophosphorylated. In terms of processing, phosphorylated and ubiquitinated upon interaction with RGF1, thus leading to activation a subsequent degradation. Expressed in floers, pollen grains and stipules. Present in roots.

The protein localises to the cell membrane. The enzyme catalyses L-seryl-[protein] + ATP = O-phospho-L-seryl-[protein] + ADP + H(+). It catalyses the reaction L-threonyl-[protein] + ATP = O-phospho-L-threonyl-[protein] + ADP + H(+). Its function is as follows. Receptor with a serine/threonine-protein kinase activity. Together with SKM1, LRR-rich receptor-like kinase (LRR-RLK) required for male fertility by the perception of CLE43 and CLE45 peptides and the transduction of their promoting action in pollen tubes, especially under relatively high temperature (at 30 degrees Celsius), thus conferring tolerance against high temperature probably through the maintenance of mitochondrial activity. Seems to not be involved in the perception of CLE45 peptide in roots. Together with RGI1, RGI2, RGI3, RGI4 and RGI5, acts as receptor of RGF1, a peptide hormone that maintains the postembryonic root stem cell niche by regulating the expression levels and patterns of the transcription factor PLETHORA (PLT). Links RGF1 signal with its downstream components. This is Leucine-rich repeat receptor-like serine/threonine-protein kinase RGI4 from Arabidopsis thaliana (Mouse-ear cress).